A 380-amino-acid chain; its full sequence is Chaperone protein DnaJ (380 aa).

In terms of domain architecture, J spans 5 to 69 (DYYEILGVSK…QKRAHYDQFG (65 aa)). The CR-type zinc-finger motif lies at 135-217 (GKETDIEIPR…CGGTGRVKRR (83 aa)). The Zn(2+) site is built by cysteine 148, cysteine 151, cysteine 165, cysteine 168, cysteine 191, cysteine 194, cysteine 205, and cysteine 208. CXXCXGXG motif repeat units lie at residues 148-155 (CNTCHGTG), 165-172 (CSYCHGTG), 191-198 (CPYCGGTG), and 205-212 (CTTCGGTG).

The protein belongs to the DnaJ family. In terms of assembly, homodimer. Requires Zn(2+) as cofactor.

The protein resides in the cytoplasm. Its function is as follows. Participates actively in the response to hyperosmotic and heat shock by preventing the aggregation of stress-denatured proteins and by disaggregating proteins, also in an autonomous, DnaK-independent fashion. Unfolded proteins bind initially to DnaJ; upon interaction with the DnaJ-bound protein, DnaK hydrolyzes its bound ATP, resulting in the formation of a stable complex. GrpE releases ADP from DnaK; ATP binding to DnaK triggers the release of the substrate protein, thus completing the reaction cycle. Several rounds of ATP-dependent interactions between DnaJ, DnaK and GrpE are required for fully efficient folding. Also involved, together with DnaK and GrpE, in the DNA replication of plasmids through activation of initiation proteins. This is Chaperone protein DnaJ from Parageobacillus thermoglucosidasius (Geobacillus thermoglucosidasius).